Consider the following 282-residue polypeptide: DNA-binding transcriptional repressor YiaJ (282 aa).

Residues 1 to 20 (MGKEVMGKKENEMAQEKERP) are compositionally biased toward basic and acidic residues. Positions 1-21 (MGKEVMGKKENEMAQEKERPA) are disordered. The HTH iclR-type domain occupies 23–85 (SQSLFRGLML…PAAGSYRLTT (63 aa)). A DNA-binding region (H-T-H motif) is located at residues 45–64 (LAHLSELAGLNKSTVHRLLQ). The 173-residue stretch at 100–272 (IIHIAAPHLE…AQAISNELGF (173 aa)) folds into the IclR-ED domain.

In terms of biological role, negatively controls the transcription of the yiaKLMNOPQRS operon, which may be involved in the utilization of 2,3-diketo-L-gulonate. The sequence is that of DNA-binding transcriptional repressor YiaJ (yiaJ) from Escherichia coli (strain K12).